A 66-amino-acid polypeptide reads, in one-letter code: MKPSLIIVTFIVVFMAISCVAADDEQETWIEKRGDCLPHLKRCKENNDCCSKKCKRRGTNPEKRCR.

The first 22 residues, 1–22 (MKPSLIIVTFIVVFMAISCVAA), serve as a signal peptide directing secretion. Positions 23 to 31 (DDEQETWIE) are excised as a propeptide. 3 disulfide bridges follow: Cys-36/Cys-50, Cys-43/Cys-54, and Cys-49/Cys-65. Residues 55–57 (KRR) are essential for stimulation of [3H]ryanodine binding to RYR1.

Belongs to the scorpion calcin family. Expressed by the venom gland.

It is found in the secreted. This toxin stabilizes ryanodine receptor 1 (RyR1) opening in a long-lasting subconductance state (35% of the full conductance state). Furthermore, it triggers calcium release from sarcoplasmic vesicles (2 nM are enough to induce a sharp release, and 67% of the total calcium is released after toxin (100 nM) addition) probably by acting as a cell-penetrating peptide (CPP). In addition, it has been shown to dose-dependently stimulate ryanodine binding to RyR1 (EC(50)=0.3 nM). It also augments the bell-shaped calcium-[3H]ryanodine binding curve that is maximal at about 10 uM calcium concentration. It binds a different site as ryanodine. It acts synergistically with caffeine. In vivo, intracerebroventricular injection into mice induces neurotoxic symptoms, followed by death. This is Opicalcin-1 from Opistophthalmus carinatus (African yellow leg scorpion).